The sequence spans 340 residues: MKMTLKELGEMLGARVQGNELLTISSVGTLESAQTDQLSFLANSKYRSQLESTQAGAVLLSEKEANNFQGNALIVKDPYVAFARVAQRLDTTPKAAVGIHPSAQIDASAQIGQGAAIGANAVIGAGVIIGEHCQIGPGCVIGEHSILGSNTRLWANVTLYHDVHLGQNCIIHSGAVLGSDGFGYANERGTWVKIPQTGGVRIGDNVEIGANTAVDRGALGHTEIGDGVILDNQVQIAHNAIIGKHTAIAGGSIIAGSTKLGQYCIVGGNSAIAGHLKIADGVHVSGGTNVTSEIREPGTYSSATVAVENKLWRRNTVRFRQLDDLFNRVKLLEKQQKTQD.

Residue His-238 is the Proton acceptor of the active site.

This sequence belongs to the transferase hexapeptide repeat family. LpxD subfamily. In terms of assembly, homotrimer.

It carries out the reaction a UDP-3-O-[(3R)-3-hydroxyacyl]-alpha-D-glucosamine + a (3R)-hydroxyacyl-[ACP] = a UDP-2-N,3-O-bis[(3R)-3-hydroxyacyl]-alpha-D-glucosamine + holo-[ACP] + H(+). Its pathway is bacterial outer membrane biogenesis; LPS lipid A biosynthesis. In terms of biological role, catalyzes the N-acylation of UDP-3-O-acylglucosamine using 3-hydroxyacyl-ACP as the acyl donor. Is involved in the biosynthesis of lipid A, a phosphorylated glycolipid that anchors the lipopolysaccharide to the outer membrane of the cell. This Shewanella denitrificans (strain OS217 / ATCC BAA-1090 / DSM 15013) protein is UDP-3-O-acylglucosamine N-acyltransferase.